A 101-amino-acid polypeptide reads, in one-letter code: Ubiquitin-related modifier 1 (101 aa).

Position 101 is a 1-thioglycine (Gly101). Gly101 is covalently cross-linked (Glycyl lysine isopeptide (Gly-Lys) (interchain with K-? in acceptor proteins)).

The protein belongs to the URM1 family. Component of a complex at least composed of URM1, CTU2/NCS2 and CTU1/ATPBD3. C-terminal thiocarboxylation occurs in 2 steps, it is first acyl-adenylated (-COAMP) via the hesA/moeB/thiF part of MOCS3, then thiocarboxylated (-COSH) via the rhodanese domain of MOCS3.

It is found in the cytoplasm. It functions in the pathway tRNA modification; 5-methoxycarbonylmethyl-2-thiouridine-tRNA biosynthesis. Its function is as follows. Acts as a sulfur carrier required for 2-thiolation of mcm(5)S(2)U at tRNA wobble positions of cytosolic tRNA(Lys), tRNA(Glu) and tRNA(Gln). Serves as sulfur donor in tRNA 2-thiolation reaction by being thiocarboxylated (-COSH) at its C-terminus by MOCS3. The sulfur is then transferred to tRNA to form 2-thiolation of mcm(5)S(2)U. Also acts as a ubiquitin-like protein (UBL) that is covalently conjugated via an isopeptide bond to lysine residues of target proteins such as MOCS3, ATPBD3, CTU2, USP15 and CAS. The thiocarboxylated form serves as substrate for conjugation and oxidative stress specifically induces the formation of UBL-protein conjugates. This Bos taurus (Bovine) protein is Ubiquitin-related modifier 1.